The sequence spans 323 residues: Beta-ketoacyl-[acyl-carrier-protein] synthase III (323 aa).

Residues C113 and H250 contribute to the active site. Residues 251-255 (QANKR) are ACP-binding. Residue N280 is part of the active site.

Belongs to the thiolase-like superfamily. FabH family. In terms of assembly, homodimer.

It is found in the cytoplasm. The enzyme catalyses malonyl-[ACP] + acetyl-CoA + H(+) = 3-oxobutanoyl-[ACP] + CO2 + CoA. The protein operates within lipid metabolism; fatty acid biosynthesis. Catalyzes the condensation reaction of fatty acid synthesis by the addition to an acyl acceptor of two carbons from malonyl-ACP. Catalyzes the first condensation reaction which initiates fatty acid synthesis and may therefore play a role in governing the total rate of fatty acid production. Possesses both acetoacetyl-ACP synthase and acetyl transacylase activities. Its substrate specificity determines the biosynthesis of branched-chain and/or straight-chain of fatty acids. The chain is Beta-ketoacyl-[acyl-carrier-protein] synthase III from Mesorhizobium japonicum (strain LMG 29417 / CECT 9101 / MAFF 303099) (Mesorhizobium loti (strain MAFF 303099)).